The following is a 104-amino-acid chain: Large ribosomal subunit protein uL24 (104 aa).

Belongs to the universal ribosomal protein uL24 family. As to quaternary structure, part of the 50S ribosomal subunit.

In terms of biological role, one of two assembly initiator proteins, it binds directly to the 5'-end of the 23S rRNA, where it nucleates assembly of the 50S subunit. One of the proteins that surrounds the polypeptide exit tunnel on the outside of the subunit. The polypeptide is Large ribosomal subunit protein uL24 (Shewanella halifaxensis (strain HAW-EB4)).